Reading from the N-terminus, the 1463-residue chain is Collagen alpha-1(I) chain (1463 aa).

The N-terminal stretch at 1-22 is a signal peptide; the sequence is MFSFVDLRLLLLLAATALLTHG. Residues 23 to 161 constitute a propeptide, N-terminal propeptide; that stretch reads QEEGQEEGQE…PPGLGGNFAP (139 aa). The VWFC domain occupies 38-96; that stretch reads VTCVQNGLRYHDRDVWKPVPCQICVCDNGNVLCDDVICDELKDCPNAKVPTDECCPVCP. The tract at residues 98–1217 is disordered; the sequence is GQESPTDQET…AHDGGRYYRA (1120 aa). A compositionally biased stretch (pro residues) spans 138-153; that stretch reads PGLPGPPGPPGPPGPP. Gln-162 carries the post-translational modification Pyrrolidone carboxylic acid. The tract at residues 162–177 is nonhelical region (N-terminal); it reads QLSYGYDEKSTGISVP. Lys-170 is modified (allysine). Position 171 is a phosphoserine (Ser-171). The tract at residues 178 to 1191 is triple-helical region; the sequence is GPMGPSGPRG…PGPPGPPGPP (1014 aa). 4-hydroxyproline is present on residues Pro-189, Pro-192, Pro-195, Pro-204, Pro-207, Pro-210, Pro-225, Pro-240, Pro-246, Pro-255, and Pro-261. The span at 197-216 shows a compositional bias: low complexity; the sequence is PQGFQGPPGEPGEPGASGPM. Over residues 228–242 the composition is skewed to basic and acidic residues; that stretch reads NGDDGEAGKPGRPGE. The residue at position 264 (Lys-264) is a 5-hydroxylysine; alternate. An O-linked (Gal...) hydroxylysine; alternate glycan is attached at Lys-264. Ser-270 is subject to Phosphoserine. A 5-hydroxylysine mark is found at Lys-276 and Lys-285. The segment covering 278 to 294 has biased composition (low complexity); that stretch reads DAGPAGPKGEPGSPGEN. Residues Pro-288, Pro-291, Pro-297, Pro-306, and Pro-312 each carry the 4-hydroxyproline modification. The span at 317-330 shows a compositional bias: low complexity; the sequence is PAGARGNDGATGAA. A compositionally biased stretch (pro residues) spans 332-344; it reads PPGPTGPAGPPGF. Pro-333, Pro-342, and Pro-345 each carry 4-hydroxyproline. Positions 349–358 are enriched in gly residues; the sequence is GAKGEGGPQG. Residues Pro-372, Pro-375, Pro-387, Pro-393, Pro-402, Pro-408, Pro-411, and Pro-426 each carry the 4-hydroxyproline modification. A compositionally biased stretch (low complexity) spans 378–417; the sequence is AGAAGPAGNPGADGQPGAKGANGAPGIAGAPGFPGARGPS. Residue Lys-429 is modified to 5-hydroxylysine. Pro-435, Pro-438, Pro-450, Pro-459, Pro-474, Pro-480, Pro-489, and Pro-495 each carry 4-hydroxyproline. Gly residues predominate over residues 484-493; sequence GERGGPGSRG. Residues 494 to 525 show a composition bias toward low complexity; sequence FPGADGVAGPKGPAGERGAPGPAGPKGSPGEA. Lys-504 carries the post-translational modification 5-hydroxylysine. 4-hydroxyproline occurs at positions 513, 522, 528, 534, 543, 546, 555, 564, 570, 582, 591, 600, 603, 621, 639, 645, 651, 657, 663, 669, 681, 690, 702, 714, 717, 723, 729, and 738. Low complexity predominate over residues 537-563; it reads KGLTGSPGSPGPDGKTGPPGPAGQDGR. Over residues 572–591 the composition is skewed to low complexity; that stretch reads ARGQAGVMGFPGPKGAAGEP. The span at 633-660 shows a compositional bias: low complexity; that stretch reads QGPAGSPGFQGLPGPAGPPGEAGKPGEQ. The span at 695–723 shows a compositional bias: low complexity; it reads PRGANGAPGNDGAKGDAGAPGAPGSQGAP. The Cell attachment site signature appears at 744–746; it reads RGD. 5-hydroxylysine is present on Lys-750. 3 positions are modified to 4-hydroxyproline: Pro-756, Pro-771, and Pro-777. A compositionally biased stretch (low complexity) spans 783 to 797; the sequence is AGPSGPAGPTGARGA. Ser-786 is subject to Phosphoserine. 4-hydroxyproline occurs at positions 798, 804, 807, 816, 822, 840, 849, and 858. Positions 810-837 are enriched in low complexity; sequence AGFAGPPGADGQPGAKGEPGDAGAKGDA. The span at 839 to 851 shows a compositional bias: pro residues; it reads PPGPAGPAGPPGP. The segment covering 852-882 has biased composition (low complexity); sequence IGNVGAPGPKGARGSAGPPGATGFPGAAGRV. Lys-861 carries the 5-hydroxylysine modification. Residues Pro-870 and Pro-876 each carry the 4-hydroxyproline modification. 3-hydroxyproline is present on Pro-884. 4-hydroxyproline is present on residues Pro-885, Pro-894, Pro-897, Pro-918, Pro-927, Pro-936, Pro-945, Pro-963, Pro-972, Pro-975, Pro-981, Pro-996, Pro-1002, Pro-1008, Pro-1017, and Pro-1023. Over residues 930–954 the composition is skewed to low complexity; that stretch reads AGEKGAPGADGPAGAPGTPGPQGIA. Over residues 995-1005 the composition is skewed to pro residues; that stretch reads PPGPMGPPGLA. Lys-1032 bears the 5-hydroxylysine mark. A compositionally biased stretch (pro residues) spans 1041 to 1056; it reads AGPPGAPGAPGAPGPV. 4-hydroxyproline occurs at positions 1044, 1047, and 1050. Residues 1077–1091 are compositionally biased toward low complexity; the sequence is IGPVGARGPAGPQGP. The short motif at 1092-1094 is the Cell attachment site element; the sequence is RGD. The segment covering 1092 to 1106 has biased composition (basic and acidic residues); it reads RGDKGETGEQGDRGI. The residue at position 1095 (Lys-1095) is a 5-hydroxylysine. Lys-1107 carries the post-translational modification 5-hydroxylysine; alternate. Residue Lys-1107 is glycosylated (O-linked (Gal...) hydroxylysine; alternate). 4-hydroxyproline occurs at positions 1119, 1122, 1125, 1143, and 1158. A compositionally biased stretch (low complexity) spans 1125 to 1149; the sequence is PGEQGPSGASGPAGPRGPPGSAGSP. At Pro-1163 the chain carries 3-hydroxyproline. Pro-1164 bears the 4-hydroxyproline mark. Positions 1176–1191 are enriched in pro residues; that stretch reads AGPPGPPGPPGPPGPP. Residue Pro-1178 is modified to 3-hydroxyproline. At Pro-1179 the chain carries 4-hydroxyproline. Pro-1181 is modified (3-hydroxyproline). At Pro-1182 the chain carries 4-hydroxyproline. A 3-hydroxyproline modification is found at Pro-1184. A 4-hydroxyproline mark is found at Pro-1185, Pro-1188, and Pro-1191. The tract at residues 1192–1215 is nonhelical region (C-terminal); it reads SGGYDLSFLPQPPQEKAHDGGRYY. Positions 1206 to 1217 are enriched in basic and acidic residues; it reads EKAHDGGRYYRA. Lys-1207 bears the Allysine mark. Residues 1218–1463 constitute a propeptide, C-terminal propeptide; it reads DDANVVRDRD…GFDVGPACFL (246 aa). The region spanning 1228–1463 is the Fibrillar collagen NC1 domain; sequence LEVDTTLKSL…GFDVGPACFL (236 aa). Cystine bridges form between Cys-1258/Cys-1290, Cys-1298/Cys-1461, and Cys-1369/Cys-1414. Asp-1276, Asn-1278, Gln-1279, Cys-1281, and Asp-1284 together coordinate Ca(2+).

The protein belongs to the fibrillar collagen family. Trimers of one alpha 2(I) and two alpha 1(I) chains. Interacts with MRC2. Interacts with TRAM2. Interacts with MFAP4 in a Ca (2+)-dependent manner. In terms of processing, contains mostly 4-hydroxyproline. Proline residues at the third position of the tripeptide repeating unit (G-X-Y) are hydroxylated in some or all of the chains. Post-translationally, contains 3-hydroxyproline at a few sites. This modification occurs on the first proline residue in the sequence motif Gly-Pro-Hyp, where Hyp is 4-hydroxyproline. Lysine residues at the third position of the tripeptide repeating unit (G-X-Y) are 5-hydroxylated in some or all of the chains. In terms of processing, O-glycosylated on hydroxylated lysine residues. The O-linked glycan consists of a Glc-Gal disaccharide. In terms of tissue distribution, forms the fibrils of tendon, ligaments and bones. In bones the fibrils are mineralized with calcium hydroxyapatite.

It localises to the secreted. The protein resides in the extracellular space. Its subcellular location is the extracellular matrix. In terms of biological role, type I collagen is a member of group I collagen (fibrillar forming collagen). The polypeptide is Collagen alpha-1(I) chain (COL1A1) (Bos taurus (Bovine)).